The chain runs to 210 residues: Guanylate kinase (210 aa).

Residues 6–186 (GLLGIISAPS…ALIYLQSVIL (181 aa)) enclose the Guanylate kinase-like domain. 13 to 20 (APSGAGKS) lines the ATP pocket.

The protein belongs to the guanylate kinase family.

The protein localises to the cytoplasm. It catalyses the reaction GMP + ATP = GDP + ADP. In terms of biological role, essential for recycling GMP and indirectly, cGMP. The polypeptide is Guanylate kinase (Blochmanniella floridana).